Consider the following 349-residue polypeptide: S-adenosylmethionine:tRNA ribosyltransferase-isomerase (349 aa).

The protein belongs to the QueA family. In terms of assembly, monomer.

It localises to the cytoplasm. The catalysed reaction is 7-aminomethyl-7-carbaguanosine(34) in tRNA + S-adenosyl-L-methionine = epoxyqueuosine(34) in tRNA + adenine + L-methionine + 2 H(+). Its pathway is tRNA modification; tRNA-queuosine biosynthesis. Transfers and isomerizes the ribose moiety from AdoMet to the 7-aminomethyl group of 7-deazaguanine (preQ1-tRNA) to give epoxyqueuosine (oQ-tRNA). The sequence is that of S-adenosylmethionine:tRNA ribosyltransferase-isomerase from Pseudomonas putida (strain W619).